We begin with the raw amino-acid sequence, 140 residues long: uncharacterized protein (140 aa).

In terms of domain architecture, VOC spans 4 to 127; that stretch reads TLTHLALHVP…AGNYVEFSYG (124 aa).

This is an uncharacterized protein from Pseudomonas aeruginosa (strain ATCC 15692 / DSM 22644 / CIP 104116 / JCM 14847 / LMG 12228 / 1C / PRS 101 / PAO1).